A 283-amino-acid polypeptide reads, in one-letter code: Diaminopimelate epimerase (283 aa).

Residues asparagine 14, glutamine 47, and asparagine 67 each coordinate substrate. Cysteine 76 serves as the catalytic Proton donor. Substrate contacts are provided by residues 77 to 78 (GN), asparagine 164, asparagine 197, and 215 to 216 (ER). Residue cysteine 224 is the Proton acceptor of the active site. Residue 225 to 226 (GT) coordinates substrate.

Belongs to the diaminopimelate epimerase family. As to quaternary structure, homodimer.

It is found in the cytoplasm. It carries out the reaction (2S,6S)-2,6-diaminopimelate = meso-2,6-diaminopimelate. Its pathway is amino-acid biosynthesis; L-lysine biosynthesis via DAP pathway; DL-2,6-diaminopimelate from LL-2,6-diaminopimelate: step 1/1. Its function is as follows. Catalyzes the stereoinversion of LL-2,6-diaminopimelate (L,L-DAP) to meso-diaminopimelate (meso-DAP), a precursor of L-lysine and an essential component of the bacterial peptidoglycan. In Neisseria meningitidis serogroup A / serotype 4A (strain DSM 15465 / Z2491), this protein is Diaminopimelate epimerase.